Here is a 100-residue protein sequence, read N- to C-terminus: Urease subunit gamma (100 aa).

The protein belongs to the urease gamma subunit family. As to quaternary structure, heterotrimer of UreA (gamma), UreB (beta) and UreC (alpha) subunits. Three heterotrimers associate to form the active enzyme.

Its subcellular location is the cytoplasm. The enzyme catalyses urea + 2 H2O + H(+) = hydrogencarbonate + 2 NH4(+). It functions in the pathway nitrogen metabolism; urea degradation; CO(2) and NH(3) from urea (urease route): step 1/1. The chain is Urease subunit gamma from Mycolicibacterium vanbaalenii (strain DSM 7251 / JCM 13017 / BCRC 16820 / KCTC 9966 / NRRL B-24157 / PYR-1) (Mycobacterium vanbaalenii).